Reading from the N-terminus, the 508-residue chain is ATP synthase subunit alpha, chloroplastic (508 aa).

An ATP-binding site is contributed by 170 to 177; the sequence is GDRQTGKT.

The protein belongs to the ATPase alpha/beta chains family. F-type ATPases have 2 components, CF(1) - the catalytic core - and CF(0) - the membrane proton channel. CF(1) has five subunits: alpha(3), beta(3), gamma(1), delta(1), epsilon(1). CF(0) has four main subunits: a, b, b' and c.

The protein localises to the plastid. The protein resides in the chloroplast thylakoid membrane. It catalyses the reaction ATP + H2O + 4 H(+)(in) = ADP + phosphate + 5 H(+)(out). Functionally, produces ATP from ADP in the presence of a proton gradient across the membrane. The alpha chain is a regulatory subunit. In Helianthus annuus (Common sunflower), this protein is ATP synthase subunit alpha, chloroplastic.